The sequence spans 283 residues: 4-diphosphocytidyl-2-C-methyl-D-erythritol kinase (283 aa).

Lysine 10 is an active-site residue. Residue 99–109 coordinates ATP; that stretch reads PMGGGLGGGSS. Aspartate 141 is a catalytic residue.

It belongs to the GHMP kinase family. IspE subfamily. As to quaternary structure, homodimer.

The enzyme catalyses 4-CDP-2-C-methyl-D-erythritol + ATP = 4-CDP-2-C-methyl-D-erythritol 2-phosphate + ADP + H(+). The protein operates within isoprenoid biosynthesis; isopentenyl diphosphate biosynthesis via DXP pathway; isopentenyl diphosphate from 1-deoxy-D-xylulose 5-phosphate: step 3/6. In terms of biological role, catalyzes the phosphorylation of the position 2 hydroxy group of 4-diphosphocytidyl-2C-methyl-D-erythritol. This chain is 4-diphosphocytidyl-2-C-methyl-D-erythritol kinase, found in Escherichia coli O9:H4 (strain HS).